A 187-amino-acid polypeptide reads, in one-letter code: Potassium-transporting ATPase KdpC subunit (187 aa).

The helical transmembrane segment at 11-31 (LILLMTVVTGALYPLAVTGIA) threads the bilayer.

This sequence belongs to the KdpC family. In terms of assembly, the system is composed of three essential subunits: KdpA, KdpB and KdpC.

Its subcellular location is the cell inner membrane. Part of the high-affinity ATP-driven potassium transport (or Kdp) system, which catalyzes the hydrolysis of ATP coupled with the electrogenic transport of potassium into the cytoplasm. This subunit acts as a catalytic chaperone that increases the ATP-binding affinity of the ATP-hydrolyzing subunit KdpB by the formation of a transient KdpB/KdpC/ATP ternary complex. This Pseudomonas entomophila (strain L48) protein is Potassium-transporting ATPase KdpC subunit.